The primary structure comprises 1249 residues: MHSDPGPWHPLLCFLVLALSTSANSDVTPRFTSKPLSTVQKPGGPVTLLCSAEPPWAHISWLFNGEQFERISSQGVDIQSGHLVIPSLGPAHVGQYQCIASTSVGAILSKSVSVSVAYLNDFETTTGHSVTAEEGSSAFIGCKIPESNPKAHVRYKVRGKWLKESSDKYLILPSGNLHILNVSVEDRGTYRCAAYNPVTHDLKLSTSTLKLSVNRSPRVDSRILHPVTSQAVLVQIHDPLTLECVVGGGPSHPPVYWYKGGQEAAAYGRRKLLHTHLVIEQVQRSDAGNYSCVLGNGSGISQRVYYTVIVLEPPSVSQKTEDQSLTAGSNVRFSCESRGNPTPNITWFHNAVQIHASTRHQISGNKIRITSLFAQDSGIYQCFVNNEAGSAQVSQRATVHLKWSKPVIVSPPTSIRVANGDLVTLTCNATGIPTPTIRWYDSHGPISSHPSQVLRSKSRKALLSKIGTPGQDPVHYTMSQAGSSSLYIRAITVQHAGTYKCEATNEFGSAHADAYLTVVPYEMSTKPEDITPLDLTQSDEGDYDSETRVPDHSQINEHKPEPRVTEKPYSGASLPEAPIILSPPQTTKPDMYNLMWRSGKDGGLPINAYFVRYRKLDDDGNMVGNWNSIRVPASENEFPLTELEPSSLYEVLMVARNAAGEGQPAMLTFRTSKERTSSSKNTQAPFPPIGVPKQTIIHGVSNTNNGLVPVDPSRHSGVPEAPDRPTISTASETSVYVTWIPRANGGSPITSFKVEYKRTGGHWNAAAENIPPSKLSVEVSNLEPGGLYKFRVIAINNYGESRRSTVSRPYQVAGYSIRLPNPLIVGPRIDQTEAVTDTQILLKWTYIPENNNNTPIQGFYIYYRPTDSDNDSDYKRDMVEGTKLRHLISHLQPETSYDIKMQCFNERGASDYSNVMMCETKARRSPGASEYPVLDLSTPSVPDRSSSPSHSPTRNGDFLYVIVGCVLGGMVLILLAFIAMCLLKNRQQTLMQKFEPPGYLYQGADLNGQIIEYTTLPGTSRINGSVHTGFMGNGNINNGCPHLHHKVHNRASEVGNGELYPGCNSSLKETYVDYDRLPHHLSNGRVMYTALPQADPTECINCRNCCNNNRCFTKPNGSYCGNGVAVMPVGFSPQQEEGETKPLNHVMVPMCLTSPDQNCSEEIEEDQNEKETQLSANSVCPEEATQTGTEQHEGEDCTKTEDDSSILTWTPLILPAISKDCDEKHVWTSTDITLDKSNVDHPQLQTQEA.

An N-terminal signal peptide occupies residues 1 to 25 (MHSDPGPWHPLLCFLVLALSTSANS). The Extracellular segment spans residues 26–957 (DVTPRFTSKP…PSHSPTRNGD (932 aa)). Ig-like C2-type domains follow at residues 29 to 113 (PRFT…KSVS), 120 to 212 (NDFE…LKLS), 217 to 307 (PRVD…VYYT), 314 to 400 (PSVS…ATVH), and 406 to 517 (PVIV…AYLT). 3 cysteine pairs are disulfide-bonded: C50–C98, C142–C192, and C244–C292. N-linked (GlcNAc...) asparagine glycosylation is found at N181, N289, N296, N344, and N428. 2 disulfides stabilise this stretch: C335-C382 and C427-C501. Disordered regions lie at residues 528-585 (EDIT…SPPQ) and 671-690 (TSKERTSSSKNTQAPFPPIG). Positions 545 to 566 (SETRVPDHSQINEHKPEPRVTE) are enriched in basic and acidic residues. Fibronectin type-III domains follow at residues 577–675 (APII…SKER), 721–815 (APDR…VAGY), and 826–923 (GPRI…TKAR). N-linked (GlcNAc...) asparagine glycosylation occurs at N870. The segment at 929 to 952 (SEYPVLDLSTPSVPDRSSSPSHSP) is disordered. The span at 937 to 952 (STPSVPDRSSSPSHSP) shows a compositional bias: low complexity. The helical transmembrane segment at 958-978 (FLYVIVGCVLGGMVLILLAFI) threads the bilayer. Residues 979–1249 (AMCLLKNRQQ…DHPQLQTQEA (271 aa)) are Cytoplasmic-facing. A disordered region spans residues 1158–1202 (NCSEEIEEDQNEKETQLSANSVCPEEATQTGTEQHEGEDCTKTED). Residues 1159-1168 (CSEEIEEDQN) show a composition bias toward acidic residues. Residues 1173 to 1189 (QLSANSVCPEEATQTGT) show a composition bias toward polar residues. The segment covering 1190–1202 (EQHEGEDCTKTED) has biased composition (basic and acidic residues).

It is found in the cell membrane. Functionally, component of a cell-surface receptor complex that mediates cell-cell interactions between muscle precursor cells. Promotes differentiation of myogenic cells. In Xenopus laevis (African clawed frog), this protein is Cell adhesion molecule-related/down-regulated by oncogenes (cdon).